A 145-amino-acid polypeptide reads, in one-letter code: D-aminoacyl-tRNA deacylase (145 aa).

The short motif at 137–138 (GP) is the Gly-cisPro motif, important for rejection of L-amino acids element.

The protein belongs to the DTD family. As to quaternary structure, homodimer.

The protein localises to the cytoplasm. The enzyme catalyses glycyl-tRNA(Ala) + H2O = tRNA(Ala) + glycine + H(+). The catalysed reaction is a D-aminoacyl-tRNA + H2O = a tRNA + a D-alpha-amino acid + H(+). Functionally, an aminoacyl-tRNA editing enzyme that deacylates mischarged D-aminoacyl-tRNAs. Also deacylates mischarged glycyl-tRNA(Ala), protecting cells against glycine mischarging by AlaRS. Acts via tRNA-based rather than protein-based catalysis; rejects L-amino acids rather than detecting D-amino acids in the active site. By recycling D-aminoacyl-tRNA to D-amino acids and free tRNA molecules, this enzyme counteracts the toxicity associated with the formation of D-aminoacyl-tRNA entities in vivo and helps enforce protein L-homochirality. In Cereibacter sphaeroides (strain KD131 / KCTC 12085) (Rhodobacter sphaeroides), this protein is D-aminoacyl-tRNA deacylase.